The primary structure comprises 291 residues: Proline iminopeptidase (291 aa).

In terms of domain architecture, AB hydrolase-1 spans 30–274 (LLIHGGPGSS…ANSRHLALLD (245 aa)). Residue serine 103 is the Nucleophile of the active site. The active site involves aspartate 242. The active-site Proton donor is the histidine 269.

It belongs to the peptidase S33 family.

It is found in the cell envelope. The catalysed reaction is Release of N-terminal proline from a peptide.. Functionally, releases the N-terminal proline from various substrates. The protein is Proline iminopeptidase of Lacticaseibacillus rhamnosus (strain Lc 705) (Lactobacillus rhamnosus).